The sequence spans 319 residues: Dehydrogenase/reductase SDR family member 9 (319 aa).

An N-terminal signal peptide occupies residues Met-1–Gly-20. NAD(+)-binding positions include Ile-34–Ala-58 and Asp-83. Ser-164 lines the substrate pocket. Tyr-176 serves as the catalytic Proton acceptor. Lys-180 lines the NAD(+) pocket.

It belongs to the short-chain dehydrogenases/reductases (SDR) family. In terms of assembly, homotetramer. Highly expressed in epithelium of estrus uterus.

The protein resides in the microsome membrane. It is found in the endoplasmic reticulum membrane. The enzyme catalyses 3beta-hydroxy-5alpha-pregnane-20-one + NAD(+) = 5alpha-pregnane-3,20-dione + NADH + H(+). It catalyses the reaction 17beta-hydroxy-5alpha-androstan-3-one + NAD(+) = 5alpha-androstan-3,17-dione + NADH + H(+). It carries out the reaction androsterone + NAD(+) = 5alpha-androstan-3,17-dione + NADH + H(+). The catalysed reaction is 5alpha-androstane-3alpha,17beta-diol + NAD(+) = 17beta-hydroxy-5alpha-androstan-3-one + NADH + H(+). The enzyme catalyses all-trans-retinol + NAD(+) = all-trans-retinal + NADH + H(+). It catalyses the reaction 3alpha-hydroxy-5alpha-pregnan-20-one + NAD(+) = 5alpha-pregnane-3,20-dione + NADH + H(+). Its function is as follows. 3-alpha-hydroxysteroid dehydrogenase that converts 3-alpha-tetrahydroprogesterone (allopregnanolone) to dihydroxyprogesterone and 3-alpha-androstanediol to dihydroxyprogesterone. Plays also role in the biosynthesis of retinoic acid from retinaldehyde. Can utilize both NADH and NADPH. The polypeptide is Dehydrogenase/reductase SDR family member 9 (Dhrs9) (Rattus norvegicus (Rat)).